The chain runs to 144 residues: Probable calcium-binding protein CML31 (144 aa).

EF-hand domains follow at residues 1–31 (MAEIFESVDKNKDGKILWDEFAEAIRVFSPQ), 32–67 (ITSEEIDKMFIVLDVDGDGQIDDVEFASCLMVNGGG), 72–107 (EEEVVMKEAFDLYDMDGDGKISASEIHVVLKRLGEK), and 108–143 (HTMEDCVVMVQTVDKDSDGFVNFEEFKIMMNSNKES). Positions 45, 47, 49, 51, 56, 85, 87, 89, 91, 96, 121, 123, 125, and 132 each coordinate Ca(2+).

Potential calcium sensor. The protein is Probable calcium-binding protein CML31 (CML31) of Arabidopsis thaliana (Mouse-ear cress).